Reading from the N-terminus, the 436-residue chain is Protein FAM83A (436 aa).

Residues 1-298 (MSRSRHVGKI…LYASSKPLMG (298 aa)) are DUF1669. Positions 73–95 (AQAKEPPDAPDSAGGAESGPRGL) are disordered. Phosphoserine is present on residues Ser301, Ser329, Ser350, and Ser359. A disordered region spans residues 302-371 (PRLVAPFQPN…APIPPTVPRL (70 aa)). Polar residues predominate over residues 321–349 (LSGTSDSASDRTSSNPFSSLSTGSNAHNQ). Over residues 350-359 (SLSTSSGPSS) the composition is skewed to low complexity.

It belongs to the FAM83 family. As to quaternary structure, directly interacts (via DUF1669) with casein kinase isoforms CSNK1A1, CSNK1A1L, CSNK1D and CSNK1E. In terms of processing, may be phosphorylated upon EGFR activation. In terms of tissue distribution, widely expressed, with relatively higher expression levels in adipose tissues, especially in epididymal and inguinal white adipose tissue (at protein level).

Its subcellular location is the cytoplasm. It localises to the mitochondrion. Functionally, involved in mitochondrial maintenance during adipogenesis. May be acting by playing a role in the maintenance of normal mitochondrial function. In Mus musculus (Mouse), this protein is Protein FAM83A.